Here is a 250-residue protein sequence, read N- to C-terminus: Urease accessory protein UreD (250 aa).

Belongs to the UreD family. UreD, UreF and UreG form a complex that acts as a GTP-hydrolysis-dependent molecular chaperone, activating the urease apoprotein by helping to assemble the nickel containing metallocenter of UreC. The UreE protein probably delivers the nickel.

It is found in the cytoplasm. In terms of biological role, required for maturation of urease via the functional incorporation of the urease nickel metallocenter. This chain is Urease accessory protein UreD, found in Aliarcobacter butzleri (strain RM4018) (Arcobacter butzleri).